Reading from the N-terminus, the 338-residue chain is H(2)-forming methylenetetrahydromethanopterin dehydrogenase-related protein MJ0715 (338 aa).

Belongs to the HMD family.

In Methanocaldococcus jannaschii (strain ATCC 43067 / DSM 2661 / JAL-1 / JCM 10045 / NBRC 100440) (Methanococcus jannaschii), this protein is H(2)-forming methylenetetrahydromethanopterin dehydrogenase-related protein MJ0715.